Consider the following 354-residue polypeptide: S-adenosylmethionine:tRNA ribosyltransferase-isomerase (354 aa).

The protein belongs to the QueA family. As to quaternary structure, monomer.

It localises to the cytoplasm. The catalysed reaction is 7-aminomethyl-7-carbaguanosine(34) in tRNA + S-adenosyl-L-methionine = epoxyqueuosine(34) in tRNA + adenine + L-methionine + 2 H(+). It participates in tRNA modification; tRNA-queuosine biosynthesis. In terms of biological role, transfers and isomerizes the ribose moiety from AdoMet to the 7-aminomethyl group of 7-deazaguanine (preQ1-tRNA) to give epoxyqueuosine (oQ-tRNA). The chain is S-adenosylmethionine:tRNA ribosyltransferase-isomerase from Salmonella paratyphi A (strain ATCC 9150 / SARB42).